The following is a 157-amino-acid chain: Nascent polypeptide-associated complex subunit beta (157 aa).

The interval 1 to 31 (MPVDPEKLAKLQKSTAKKVGGSRVKAKKGVK) is disordered. Positions 33–98 (EQDDTKLIET…PQEKNITQLI (66 aa)) constitute an NAC-A/B domain. The segment at 125 to 157 (NPKDFGAAGEAGATEEANEDIPDLVDQKFDDVE) is disordered. A compositionally biased stretch (low complexity) spans 130-139 (GAAGEAGATE).

It belongs to the NAC-beta family. Part of the nascent polypeptide-associated complex (NAC), consisting of EGD2 and EGD1. NAC associates with ribosomes via EGD1.

It localises to the cytoplasm. The protein localises to the nucleus. Functionally, component of the nascent polypeptide-associated complex (NAC), a dynamic component of the ribosomal exit tunnel, protecting the emerging polypeptides from interaction with other cytoplasmic proteins to ensure appropriate nascent protein targeting. The NAC complex also promotes mitochondrial protein import by enhancing productive ribosome interactions with the outer mitochondrial membrane and blocks the inappropriate interaction of ribosomes translating non-secretory nascent polypeptides with translocation sites in the membrane of the endoplasmic reticulum. EGD1 may act as a transcription factor that exert a negative effect on the expression of several genes that are transcribed by RNA polymerase II. This is Nascent polypeptide-associated complex subunit beta (EGD1) from Lodderomyces elongisporus (strain ATCC 11503 / CBS 2605 / JCM 1781 / NBRC 1676 / NRRL YB-4239) (Yeast).